The primary structure comprises 697 residues: Putative flagellar export/assembly protein LfhA (697 aa).

7 helical membrane-spanning segments follow: residues 19 to 39 (VPLVILCILAMVILPLPPALL), 40 to 60 (DILFTFNIVLAVMVLLVAVSA), 66 to 86 (FSLFPTILLITTLMRLTLNVA), 116 to 136 (GNFVVGFVVFIILMIINFIVV), 204 to 224 (AIAGMMILAINLIGGVCIGIF), 242 to 262 (IGDGLVAQIPSLLLSTAAAII), and 280 to 302 (LLASPSVLYTATGIMFVLAVVPG).

The protein belongs to the FHIPEP (flagella/HR/invasion proteins export pore) family.

The protein localises to the cell inner membrane. Its function is as follows. Part of the flagellar gene cluster Flag-2. However, the Flag-2 flagellar system could be inactive in strain 042 due to a frameshift in lfgC. The sequence is that of Putative flagellar export/assembly protein LfhA from Escherichia coli O44:H18 (strain 042 / EAEC).